The sequence spans 429 residues: Forkhead box protein A1-A (429 aa).

The segment at residues 159–253 (KPPYSYISLI…ENGCYLRRQK (95 aa)) is a DNA-binding region (fork-head). Residues 258–274 (EKTQGGKGNQDGRKDHS) are compositionally biased toward basic and acidic residues. Residues 258–341 (EKTQGGKGNQ…HSTHSLAHES (84 aa)) are disordered. Low complexity predominate over residues 287–304 (SSQMDSSSSMSNPSSSPQ). Polar residues predominate over residues 325–336 (PLSSHQNHSTHS).

As to expression, at neurula stage, expressed in the notochord but not in the neural floor plate. During tailbud stages, expressed in the neural floor plate. At stage 35, expressed in the rhombencephalon, mesencephalon, pharyngeal pouches, foregut and pronephros. At stage 44, expressed in a region of the gut on the right hand side of the embryo. Expressed in the adult lung and liver.

It is found in the nucleus. In terms of biological role, probable transcription factor. The protein is Forkhead box protein A1-A (foxa1-a) of Xenopus laevis (African clawed frog).